The sequence spans 410 residues: BTB/POZ and MATH domain-containing protein 5 (410 aa).

A disordered region spans residues 1-24 (MSESVIQGSNPDRVLSPTSSKSVT). One can recognise an MATH domain in the interval 28 to 162 (NGSHQFVIQG…DDCLIINCTV (135 aa)). One can recognise a BTB domain in the interval 198–264 (SDITFNIAGE…MYKDSLPEDV (67 aa)).

This sequence belongs to the Tdpoz family. Heterodimer with BPM1 and BPM3. Interacts with RAP2-4. Binds to MYB56 at the promoter of FLOWERING LOCUS T (FT). In terms of tissue distribution, ubiquitous.

It localises to the nucleus. It is found in the cytoplasm. It functions in the pathway protein modification; protein ubiquitination. May act as a substrate-specific adapter of an E3 ubiquitin-protein ligase complex (CUL3-RBX1-BTB) which mediates the ubiquitination and subsequent proteasomal degradation of target proteins. The chain is BTB/POZ and MATH domain-containing protein 5 (BPM5) from Arabidopsis thaliana (Mouse-ear cress).